A 363-amino-acid chain; its full sequence is MTLRAPPLSAIHERADASFTDFGGWEMPVEFESIRIEHEAVRSEAGKFDVSHMGQITVAGPDAATLTQRLTTNDVTVLDPGEAQYGAITDEDGIMLDDTVVYRLPEGAADEFLFIPNAGHDGEMTERWLSERDERGLDATVTNRTEEYAMIAVQGPDAPDLLSAETDVSLTALSRFEVAAGAVAGVDSLIARTGYTGEPGFEILCPPDDAGVVWDALECQPCGLGARDTLRLEMGFLLSGQEFHPVDEPRTPYEAGIGWTVKLDTEFVARDALEGVAADGPEEKLIGIELVDRGVPRHGYDVTTPDGEPIGHITSGTMSPTLGAPIALAYVPSAYAEPDKSVRVVVRGEPKKARTRSTPFLDR.

It belongs to the GcvT family. The glycine cleavage system is composed of four proteins: P, T, L and H.

It catalyses the reaction N(6)-[(R)-S(8)-aminomethyldihydrolipoyl]-L-lysyl-[protein] + (6S)-5,6,7,8-tetrahydrofolate = N(6)-[(R)-dihydrolipoyl]-L-lysyl-[protein] + (6R)-5,10-methylene-5,6,7,8-tetrahydrofolate + NH4(+). In terms of biological role, the glycine cleavage system catalyzes the degradation of glycine. The sequence is that of Probable aminomethyltransferase from Haloarcula marismortui (strain ATCC 43049 / DSM 3752 / JCM 8966 / VKM B-1809) (Halobacterium marismortui).